A 2339-amino-acid chain; its full sequence is DNA-directed RNA polymerase III subunit RPC1 (2339 aa).

Zn(2+) is bound by residues Cys-88, Cys-91, Cys-98, His-101, Cys-128, Cys-131, and Cys-175. Mg(2+)-binding residues include Asp-611, Asp-613, and Asp-615. Residues 955-967 (PTEFFFHTMSGRE) form a bridging helix region. Disordered regions lie at residues 1503 to 1557 (EKRK…NNYY) and 2038 to 2079 (LKSE…DSDR). The span at 1509–1520 (PKEEKENFDRNN) shows a compositional bias: basic and acidic residues. Residues 1521–1557 (YKMITDNNNNDNNNNNNDNNNNDNNNNNNNSNNNNYY) show a composition bias toward low complexity. The segment covering 2038-2047 (LKSEKKKDIN) has biased composition (basic and acidic residues). The segment covering 2049–2059 (DNNNNDDNNNN) has biased composition (low complexity).

Belongs to the RNA polymerase beta' chain family. In terms of assembly, component of the RNA polymerase III (Pol III) complex consisting of 17 subunits.

Its subcellular location is the nucleus. The catalysed reaction is RNA(n) + a ribonucleoside 5'-triphosphate = RNA(n+1) + diphosphate. DNA-dependent RNA polymerase catalyzes the transcription of DNA into RNA using the four ribonucleoside triphosphates as substrates. Largest and catalytic core component of RNA polymerase III which synthesizes small RNAs, such as 5S rRNA and tRNAs. Forms the polymerase active center together with the second largest subunit. A single-stranded DNA template strand of the promoter is positioned within the central active site cleft of Pol III. A bridging helix emanates from RPC1 and crosses the cleft near the catalytic site and is thought to promote translocation of Pol III by acting as a ratchet that moves the RNA-DNA hybrid through the active site by switching from straight to bent conformations at each step of nucleotide addition. The protein is DNA-directed RNA polymerase III subunit RPC1 of Plasmodium falciparum.